The chain runs to 136 residues: ATP synthase epsilon chain (136 aa).

It belongs to the ATPase epsilon chain family. As to quaternary structure, F-type ATPases have 2 components, CF(1) - the catalytic core - and CF(0) - the membrane proton channel. CF(1) has five subunits: alpha(3), beta(3), gamma(1), delta(1), epsilon(1). CF(0) has three main subunits: a, b and c.

The protein resides in the cell inner membrane. Its function is as follows. Produces ATP from ADP in the presence of a proton gradient across the membrane. The chain is ATP synthase epsilon chain from Persephonella marina (strain DSM 14350 / EX-H1).